Consider the following 368-residue polypeptide: Endoglucanase (368 aa).

The N-terminal stretch at 1-21 (MNVLRSGIVTMLLLAAFSVQA) is a signal peptide. Glu-55 acts as the Proton donor in catalysis. The active-site Nucleophile is the Asp-116.

The protein belongs to the glycosyl hydrolase 8 (cellulase D) family.

It is found in the secreted. The catalysed reaction is Endohydrolysis of (1-&gt;4)-beta-D-glucosidic linkages in cellulose, lichenin and cereal beta-D-glucans.. The protein operates within glycan metabolism; bacterial cellulose biosynthesis. In terms of biological role, hydrolyzes carboxymethylcellulose. The chain is Endoglucanase (bcsZ) from Escherichia coli (strain K12).